A 409-amino-acid polypeptide reads, in one-letter code: Putative competence-damage inducible protein (409 aa).

Belongs to the CinA family.

The polypeptide is Putative competence-damage inducible protein (Clostridium botulinum (strain Loch Maree / Type A3)).